The following is a 212-amino-acid chain: Large ribosomal subunit protein uL3 (212 aa).

At glutamine 153 the chain carries N5-methylglutamine.

It belongs to the universal ribosomal protein uL3 family. Part of the 50S ribosomal subunit. Forms a cluster with proteins L14 and L19. Post-translationally, methylated by PrmB.

Its function is as follows. One of the primary rRNA binding proteins, it binds directly near the 3'-end of the 23S rRNA, where it nucleates assembly of the 50S subunit. This chain is Large ribosomal subunit protein uL3, found in Idiomarina loihiensis (strain ATCC BAA-735 / DSM 15497 / L2-TR).